The following is a 379-amino-acid chain: Dual-specificity RNA methyltransferase RlmN (379 aa).

The active-site Proton acceptor is the Glu96. The 241-residue stretch at 102 to 342 (TDDRGTLCVS…TRTTRGDDID (241 aa)) folds into the Radical SAM core domain. Residues Cys109 and Cys345 are joined by a disulfide bond. Residues Cys116, Cys120, and Cys123 each contribute to the [4Fe-4S] cluster site. S-adenosyl-L-methionine contacts are provided by residues 170–171 (GE), Ser202, 224–226 (SLH), and Asn302. Cys345 acts as the S-methylcysteine intermediate in catalysis.

This sequence belongs to the radical SAM superfamily. RlmN family. [4Fe-4S] cluster serves as cofactor.

Its subcellular location is the cytoplasm. The catalysed reaction is adenosine(2503) in 23S rRNA + 2 reduced [2Fe-2S]-[ferredoxin] + 2 S-adenosyl-L-methionine = 2-methyladenosine(2503) in 23S rRNA + 5'-deoxyadenosine + L-methionine + 2 oxidized [2Fe-2S]-[ferredoxin] + S-adenosyl-L-homocysteine. It carries out the reaction adenosine(37) in tRNA + 2 reduced [2Fe-2S]-[ferredoxin] + 2 S-adenosyl-L-methionine = 2-methyladenosine(37) in tRNA + 5'-deoxyadenosine + L-methionine + 2 oxidized [2Fe-2S]-[ferredoxin] + S-adenosyl-L-homocysteine. Its function is as follows. Specifically methylates position 2 of adenine 2503 in 23S rRNA and position 2 of adenine 37 in tRNAs. m2A2503 modification seems to play a crucial role in the proofreading step occurring at the peptidyl transferase center and thus would serve to optimize ribosomal fidelity. This chain is Dual-specificity RNA methyltransferase RlmN, found in Pseudomonas entomophila (strain L48).